The chain runs to 335 residues: Probable cytosolic iron-sulfur protein assembly protein Ciao1 (335 aa).

WD repeat units lie at residues 12 to 51 (GHKG…WSTK), 57 to 96 (GHKR…FECN), 101 to 140 (GHEN…EFEC), 146 to 185 (AHTQ…SDWD), 192 to 231 (SHTS…NDAG), 250 to 289 (QHSR…KRDE), and 301 to 335 (AHEQ…KVDD).

It belongs to the WD repeat CIA1 family.

In terms of biological role, essential component of the cytosolic iron-sulfur (Fe/S) protein assembly machinery. Required for the maturation of extramitochondrial Fe/S proteins. The sequence is that of Probable cytosolic iron-sulfur protein assembly protein Ciao1 from Drosophila pseudoobscura pseudoobscura (Fruit fly).